The sequence spans 204 residues: uncharacterized protein (204 aa).

The first 24 residues, 1-24 (MPINTFCKISLFICALFCSTVTLA), serve as a signal peptide directing secretion.

This is an uncharacterized protein from Pasteurella multocida (strain Pm70).